We begin with the raw amino-acid sequence, 276 residues long: Bis(5'-nucleosyl)-tetraphosphatase, symmetrical (276 aa).

It belongs to the Ap4A hydrolase family.

The enzyme catalyses P(1),P(4)-bis(5'-adenosyl) tetraphosphate + H2O = 2 ADP + 2 H(+). Hydrolyzes diadenosine 5',5'''-P1,P4-tetraphosphate to yield ADP. This is Bis(5'-nucleosyl)-tetraphosphatase, symmetrical from Tolumonas auensis (strain DSM 9187 / NBRC 110442 / TA 4).